The primary structure comprises 130 residues: Glycine cleavage system H protein (130 aa).

Residues M25–K106 form the Lipoyl-binding domain. An N6-lipoyllysine modification is found at K66.

The protein belongs to the GcvH family. The glycine cleavage system is composed of four proteins: P, T, L and H. It depends on (R)-lipoate as a cofactor.

Its function is as follows. The glycine cleavage system catalyzes the degradation of glycine. The H protein shuttles the methylamine group of glycine from the P protein to the T protein. In Leptospira interrogans serogroup Icterohaemorrhagiae serovar copenhageni (strain Fiocruz L1-130), this protein is Glycine cleavage system H protein.